Reading from the N-terminus, the 376-residue chain is Queuine tRNA-ribosyltransferase (376 aa).

Residue Asp-89 is the Proton acceptor of the active site. Substrate is bound by residues 89 to 93, Asp-143, Gln-194, and Gly-221; that span reads DSGGF. The segment at 252–258 is RNA binding; that stretch reads GVGLPSN. Catalysis depends on Asp-271, which acts as the Nucleophile. An RNA binding; important for wobble base 34 recognition region spans residues 276 to 280; sequence ARNGR. Positions 309, 311, 314, and 340 each coordinate Zn(2+).

The protein belongs to the queuine tRNA-ribosyltransferase family. As to quaternary structure, homodimer. Within each dimer, one monomer is responsible for RNA recognition and catalysis, while the other monomer binds to the replacement base PreQ1. Zn(2+) is required as a cofactor.

The enzyme catalyses 7-aminomethyl-7-carbaguanine + guanosine(34) in tRNA = 7-aminomethyl-7-carbaguanosine(34) in tRNA + guanine. It participates in tRNA modification; tRNA-queuosine biosynthesis. Functionally, catalyzes the base-exchange of a guanine (G) residue with the queuine precursor 7-aminomethyl-7-deazaguanine (PreQ1) at position 34 (anticodon wobble position) in tRNAs with GU(N) anticodons (tRNA-Asp, -Asn, -His and -Tyr). Catalysis occurs through a double-displacement mechanism. The nucleophile active site attacks the C1' of nucleotide 34 to detach the guanine base from the RNA, forming a covalent enzyme-RNA intermediate. The proton acceptor active site deprotonates the incoming PreQ1, allowing a nucleophilic attack on the C1' of the ribose to form the product. After dissociation, two additional enzymatic reactions on the tRNA convert PreQ1 to queuine (Q), resulting in the hypermodified nucleoside queuosine (7-(((4,5-cis-dihydroxy-2-cyclopenten-1-yl)amino)methyl)-7-deazaguanosine). This chain is Queuine tRNA-ribosyltransferase, found in Clostridium tetani (strain Massachusetts / E88).